The chain runs to 136 residues: Probable 5-hydroxyisourate hydrolase ZK697.8 (136 aa).

The signal sequence occupies residues 1-19 (MIKFLLFLAIAAATVISNA). Residues His31, Arg69, and Tyr133 each coordinate substrate.

The protein belongs to the transthyretin family. 5-hydroxyisourate hydrolase subfamily. Homotetramer.

It catalyses the reaction 5-hydroxyisourate + H2O = 5-hydroxy-2-oxo-4-ureido-2,5-dihydro-1H-imidazole-5-carboxylate + H(+). Functionally, catalyzes the hydrolysis of 5-hydroxyisourate (HIU) to 2-oxo-4-hydroxy-4-carboxy-5-ureidoimidazoline (OHCU). In Caenorhabditis elegans, this protein is Probable 5-hydroxyisourate hydrolase ZK697.8.